A 502-amino-acid polypeptide reads, in one-letter code: Adenylate cyclase (502 aa).

Residues 1–25 (MGDFCRRVDCKAMKFFALRSSIRTQ) lie on the Cytoplasmic side of the membrane. A helical membrane pass occupies residues 26-46 (IMASTTLLILALIGAIVTVWA). At 47-203 (KSESTLYHQE…RKVNLAVTNA (157 aa)) the chain is on the lumenal, thylakoid side. Residues 204–226 (VNQALVVGFAGLNIGWICAYFLA) form a helical membrane-spanning segment. The region spanning 227–280 (QHLSDPVRRLQISVAKIAGGDLQHRADIHSRADEIGALATSVNEMSAALQISFN) is the HAMP domain. Over 227 to 502 (QHLSDPVRRL…EAISIYEVKA (276 aa)) the chain is Cytoplasmic. The Guanylate cyclase domain occupies 320-451 (TILFCDIRGY…DAVNVASRIE (132 aa)). Residues D325 and D369 each coordinate Mg(2+).

The protein belongs to the adenylyl cyclase class-3 family. Mg(2+) serves as cofactor.

It is found in the cellular thylakoid membrane. It carries out the reaction ATP = 3',5'-cyclic AMP + diphosphate. Its function is as follows. May function as a membrane-localized receptor protein. This Anabaena cylindrica protein is Adenylate cyclase (cya).